The chain runs to 154 residues: Peptidoglycan amidase Tse1 (154 aa).

A disulfide bridge connects residues Cys7 and Cys148. Cys30 functions as the Nucleophile in the catalytic mechanism. His91 acts as the Proton acceptor in catalysis.

As to quaternary structure, forms a heterotetramer with Tsi1 consisting of two Tse1 dimers and two Tsi1 dimers. Formation of the complex inactivates Tse1 enzymatic activity.

The protein localises to the host membrane. Its subcellular location is the secreted. The catalysed reaction is Hydrolysis of gamma-D-glutamyl bonds to the L-terminus (position 7) of meso-diaminopimelic acid (meso-A2pm) in 7-(L-Ala-gamma-D-Glu)-meso-A2pm and 7-(L-Ala-gamma-D-Glu)-7-(D-Ala)-meso-A2pm. It is required that the D-terminal amino and carboxy groups of meso-A2pm are unsubstituted.. Toxin secreted by the H1 type VI (H1-T6SS) secretion system into the periplasm of recipient cells. Degrades peptidoglycan via amidase activity thereby helping itself to compete with other bacteria. To protect itself, the bacterium synthesizes immunity protein Tsi1 that specifically interacts with and inactivates cognate toxin. This chain is Peptidoglycan amidase Tse1, found in Pseudomonas aeruginosa (strain ATCC 15692 / DSM 22644 / CIP 104116 / JCM 14847 / LMG 12228 / 1C / PRS 101 / PAO1).